The following is a 272-amino-acid chain: D-aminoacyl-tRNA deacylase (272 aa).

As to quaternary structure, monomer. It depends on Zn(2+) as a cofactor.

It catalyses the reaction a D-aminoacyl-tRNA + H2O = a tRNA + a D-alpha-amino acid + H(+). The catalysed reaction is glycyl-tRNA(Ala) + H2O = tRNA(Ala) + glycine + H(+). The enzyme catalyses D-tyrosyl-tRNA(Tyr) + H2O = D-tyrosine + tRNA(Tyr). In terms of biological role, D-aminoacyl-tRNA deacylase with broad substrate specificity. By recycling D-aminoacyl-tRNA to D-amino acids and free tRNA molecules, this enzyme counteracts the toxicity associated with the formation of D-aminoacyl-tRNA entities in vivo. Catalyzes the hydrolysis of D-tyrosyl-tRNA(Tyr) and D-aspartyl-tRNA(Asp). The protein is D-aminoacyl-tRNA deacylase of Pyrococcus abyssi (strain GE5 / Orsay).